A 152-amino-acid polypeptide reads, in one-letter code: Dimethylsulfoniopropionate lyase DddW (152 aa).

The Cupin type-2 domain occupies 69-124; sequence IAEFGPGHQLRPHRHTPPEFYLGLEGSGIVTIDGVPHEIRAGVALYIPGDAEHGTV. 4 residues coordinate Fe cation: histidine 83, glutamate 87, tyrosine 89, and histidine 121.

Belongs to the non-heme iron-dependent dioxygenase family. In terms of assembly, homodimer. Fe(2+) serves as cofactor.

It carries out the reaction S,S-dimethyl-beta-propiothetin = acrylate + dimethyl sulfide + H(+). Its function is as follows. Able to cleave dimethylsulfoniopropionate (DMSP), releasing dimethyl sulfide (DMS) and acrylate. DMS is the principal form by which sulfur is transported from oceans to the atmosphere. The polypeptide is Dimethylsulfoniopropionate lyase DddW (Ruegeria pomeroyi (strain ATCC 700808 / DSM 15171 / DSS-3) (Silicibacter pomeroyi)).